The sequence spans 601 residues: Glutathione-regulated potassium-efflux system protein KefB (601 aa).

13 helical membrane passes run 5-25 (SLLM…PLAA), 29-49 (IGAV…GLGF), 55-75 (EILH…GLEL), 87-107 (IFGV…GLLW), 115-135 (AAII…LQLM), 152-172 (VLLF…LLAG), 180-202 (WMKL…YLLR), 207-227 (FIAA…LVLG), 230-250 (LFME…GILL), 268-288 (GLLL…GVLY), 291-311 (ILEI…VLYL), 324-344 (LQFS…FSAA), and 356-376 (PLLL…MQGV). Residues 400–519 (KPQVIVVGFG…AGVTQFSRET (120 aa)) form the RCK N-terminal domain.

It belongs to the monovalent cation:proton antiporter 2 (CPA2) transporter (TC 2.A.37) family. KefB subfamily. As to quaternary structure, interacts with the regulatory subunit KefG.

Its subcellular location is the cell inner membrane. Pore-forming subunit of a potassium efflux system that confers protection against electrophiles. Catalyzes K(+)/H(+) antiport. The polypeptide is Glutathione-regulated potassium-efflux system protein KefB (Erwinia tasmaniensis (strain DSM 17950 / CFBP 7177 / CIP 109463 / NCPPB 4357 / Et1/99)).